The primary structure comprises 441 residues: MKKLASLQFFNLKLLLNGESSRGFSKFKKNYKLKAELGRGGFGVVYRAVRTCDNALVAVKFIERSNVKEWARINGEQVPMEICMLAKCSKVRGVIRLLDWYSIPEGFLIVMERPYPCIDMFDFIKGQGKISEDMARFLFRQIAVTVHECVQNRVLHRDLKDENIVIDLVTGSTKLIDFGAATVLRRSQYSDFQGTRLYCPPEWFLHSLYLGREAAVWSLGVLLYNSLNGRLPFRNEKDICTAHLLGPLPFFVPVSAEVKDLISKCLTFDPFQRCSLEAILNHPWVKQQTLSWDALTKNKVQKKTSESSDDHHSETLGDHSETEEDRSPPTSSVSQQPGSADEGVGLSASSSNTHNQKKPNHKEFRMAKTSLLAPPTSIEMKAAVQASKTPTQFNVHTALKNQRQIKKHHSPQPPNSTVLTALRRAMSREAQNRISGVFSQD.

Positions 31–285 constitute a Protein kinase domain; that stretch reads YKLKAELGRG…LEAILNHPWV (255 aa). ATP-binding positions include 37–45 and Lys60; that span reads LGRGGFGVV. Asp158 (proton acceptor) is an active-site residue. Positions 301 to 364 are disordered; that stretch reads QKKTSESSDD…NQKKPNHKEF (64 aa). The span at 303–320 shows a compositional bias: basic and acidic residues; that stretch reads KTSESSDDHHSETLGDHS. The segment covering 328–338 has biased composition (polar residues); that stretch reads PPTSSVSQQPG.

Belongs to the protein kinase superfamily. Ser/Thr protein kinase family. PIM subfamily. Requires Mg(2+) as cofactor.

The catalysed reaction is L-seryl-[protein] + ATP = O-phospho-L-seryl-[protein] + ADP + H(+). The enzyme catalyses L-threonyl-[protein] + ATP = O-phospho-L-threonyl-[protein] + ADP + H(+). Functionally, involved in the negative regulation of synaptic differentiation in PLM neurons. This chain is Serine/threonine-protein kinase prk-2, found in Caenorhabditis elegans.